Consider the following 668-residue polypeptide: 1-deoxy-D-xylulose-5-phosphate synthase (668 aa).

Thiamine diphosphate is bound by residues histidine 105 and 146-148 (AHS). Residue aspartate 177 coordinates Mg(2+). Residues 178 to 179 (GA), asparagine 206, tyrosine 316, and glutamate 398 each bind thiamine diphosphate. A Mg(2+)-binding site is contributed by asparagine 206.

Belongs to the transketolase family. DXPS subfamily. Homodimer. Requires Mg(2+) as cofactor. Thiamine diphosphate is required as a cofactor.

The enzyme catalyses D-glyceraldehyde 3-phosphate + pyruvate + H(+) = 1-deoxy-D-xylulose 5-phosphate + CO2. Its pathway is metabolic intermediate biosynthesis; 1-deoxy-D-xylulose 5-phosphate biosynthesis; 1-deoxy-D-xylulose 5-phosphate from D-glyceraldehyde 3-phosphate and pyruvate: step 1/1. Functionally, catalyzes the acyloin condensation reaction between C atoms 2 and 3 of pyruvate and glyceraldehyde 3-phosphate to yield 1-deoxy-D-xylulose-5-phosphate (DXP). This Nitrobacter hamburgensis (strain DSM 10229 / NCIMB 13809 / X14) protein is 1-deoxy-D-xylulose-5-phosphate synthase.